A 521-amino-acid chain; its full sequence is Bifunctional purine biosynthesis protein PurH (521 aa).

Residues methionine 1–valine 145 form the MGS-like domain.

Belongs to the PurH family.

The enzyme catalyses (6R)-10-formyltetrahydrofolate + 5-amino-1-(5-phospho-beta-D-ribosyl)imidazole-4-carboxamide = 5-formamido-1-(5-phospho-D-ribosyl)imidazole-4-carboxamide + (6S)-5,6,7,8-tetrahydrofolate. It carries out the reaction IMP + H2O = 5-formamido-1-(5-phospho-D-ribosyl)imidazole-4-carboxamide. It functions in the pathway purine metabolism; IMP biosynthesis via de novo pathway; 5-formamido-1-(5-phospho-D-ribosyl)imidazole-4-carboxamide from 5-amino-1-(5-phospho-D-ribosyl)imidazole-4-carboxamide (10-formyl THF route): step 1/1. Its pathway is purine metabolism; IMP biosynthesis via de novo pathway; IMP from 5-formamido-1-(5-phospho-D-ribosyl)imidazole-4-carboxamide: step 1/1. This chain is Bifunctional purine biosynthesis protein PurH, found in Burkholderia multivorans (strain ATCC 17616 / 249).